The following is a 270-amino-acid chain: UPF0354 protein BA_4944/GBAA_4944/BAS4588 (270 aa).

It belongs to the UPF0354 family.

The protein is UPF0354 protein BA_4944/GBAA_4944/BAS4588 of Bacillus anthracis.